A 119-amino-acid chain; its full sequence is Protein TusC (119 aa).

Belongs to the DsrF/TusC family. In terms of assembly, heterohexamer, formed by a dimer of trimers. The hexameric TusBCD complex contains 2 copies each of TusB, TusC and TusD. The TusBCD complex interacts with TusE.

Its subcellular location is the cytoplasm. Functionally, part of a sulfur-relay system required for 2-thiolation of 5-methylaminomethyl-2-thiouridine (mnm(5)s(2)U) at tRNA wobble positions. The chain is Protein TusC from Shigella sonnei (strain Ss046).